We begin with the raw amino-acid sequence, 101 residues long: Floral defensin-like protein 2 (101 aa).

The signal sequence occupies residues 1–25 (MARSICFFAVAILALMLFAAYETEA). 5 disulfides stabilise this stretch: Cys-28–Cys-74, Cys-32–Cys-48, Cys-39–Cys-61, Cys-45–Cys-68, and Cys-49–Cys-70. Positions 75–101 (ATEEATATLANEVKTMAEALVEEDMME) are cleaved as a propeptide — removed in mature form.

Belongs to the DEFL family. Post-translationally, when compared to other plant defensins, the petunia defensins have an additional fifth disulfide bond. Petals.

It localises to the secreted. The protein localises to the vacuole. In terms of biological role, plant defense peptide with antifungal activity against F.oxysporum and B.cinerea. The chain is Floral defensin-like protein 2 (D2) from Petunia hybrida (Petunia).